The following is a 340-amino-acid chain: MSSIRLADLAQQLDAQLHGDGDIVITGIASMGSAQAGQITFLSDSRFREKLSSCQASAVVLTADSLPFFTGAALVVRNPYLTYARMAQLMDITPKPAEDIGAGAVIAPDATLGQRVAVGANAVIESGVVLGDDVIIGPGCFVGKNTRIGAGTRLWANVTVYHDISIGERCLIQSGTVIGADGFGYANDRGNWIKIPQLGRVIIGDRVEIGACTTIDRGALDDTRIGNGVIIDNQCQIAHNVVIGDNTAVAGGVIMAGSLTIGRYCMIGGASVINGHMAICDKVTVTGMGMVMRPITEPGVYSSGIPLQPNKEWRKTAALVMNISDMSKRMKAIERKLAKN.

His-239 acts as the Proton acceptor in catalysis.

It belongs to the transferase hexapeptide repeat family. LpxD subfamily. In terms of assembly, homotrimer.

It carries out the reaction a UDP-3-O-[(3R)-3-hydroxyacyl]-alpha-D-glucosamine + a (3R)-hydroxyacyl-[ACP] = a UDP-2-N,3-O-bis[(3R)-3-hydroxyacyl]-alpha-D-glucosamine + holo-[ACP] + H(+). The enzyme catalyses UDP-3-O-[(3R)-3-hydroxytetradecanoyl]-alpha-D-glucosamine + (3R)-hydroxytetradecanoyl-[ACP] = UDP-2-N,3-O-bis[(3R)-3-hydroxytetradecanoyl]-alpha-D-glucosamine + holo-[ACP] + H(+). It participates in glycolipid biosynthesis; lipid IV(A) biosynthesis; lipid IV(A) from (3R)-3-hydroxytetradecanoyl-[acyl-carrier-protein] and UDP-N-acetyl-alpha-D-glucosamine: step 3/6. In terms of biological role, catalyzes the N-acylation of UDP-3-O-(hydroxytetradecanoyl)glucosamine using 3-hydroxytetradecanoyl-ACP as the acyl donor. Is involved in the biosynthesis of lipid A, a phosphorylated glycolipid that anchors the lipopolysaccharide to the outer membrane of the cell. The sequence is that of UDP-3-O-(3-hydroxymyristoyl)glucosamine N-acyltransferase from Sodalis glossinidius (strain morsitans).